We begin with the raw amino-acid sequence, 310 residues long: Malate dehydrogenase (310 aa).

NAD(+) contacts are provided by residues 7–12 (GAGNVG) and D32. 2 residues coordinate substrate: R81 and R87. Residues N94 and 117-119 (VSN) each bind NAD(+). 2 residues coordinate substrate: N119 and R150. H174 (proton acceptor) is an active-site residue.

This sequence belongs to the LDH/MDH superfamily. MDH type 3 family.

It catalyses the reaction (S)-malate + NAD(+) = oxaloacetate + NADH + H(+). Functionally, catalyzes the reversible oxidation of malate to oxaloacetate. This chain is Malate dehydrogenase, found in Chlorobium phaeobacteroides (strain DSM 266 / SMG 266 / 2430).